Reading from the N-terminus, the 249-residue chain is Triosephosphate isomerase (249 aa).

8 to 10 (NWK) serves as a coordination point for substrate. The active-site Electrophile is histidine 95. Residue glutamate 166 is the Proton acceptor of the active site. Residues glycine 172, serine 211, and 232–233 (GG) each bind substrate.

Belongs to the triosephosphate isomerase family. In terms of assembly, homodimer.

The protein localises to the cytoplasm. It carries out the reaction D-glyceraldehyde 3-phosphate = dihydroxyacetone phosphate. Its pathway is carbohydrate biosynthesis; gluconeogenesis. It functions in the pathway carbohydrate degradation; glycolysis; D-glyceraldehyde 3-phosphate from glycerone phosphate: step 1/1. In terms of biological role, involved in the gluconeogenesis. Catalyzes stereospecifically the conversion of dihydroxyacetone phosphate (DHAP) to D-glyceraldehyde-3-phosphate (G3P). This chain is Triosephosphate isomerase, found in Granulibacter bethesdensis (strain ATCC BAA-1260 / CGDNIH1).